The primary structure comprises 320 residues: RNA-binding protein Musashi homolog 1 (320 aa).

Low complexity predominate over residues 1 to 14 (MTTTVSTGATAVAT). The segment at 1–48 (MTTTVSTGATAVATLRETSPPVDGHEEARLNADSDDGSHGSQDPGKMF) is disordered. T18 bears the Phosphothreonine mark. Residues S19 and S34 each carry the phosphoserine modification. Residues 23 to 38 (DGHEEARLNADSDDGS) are compositionally biased toward basic and acidic residues. RRM domains follow at residues 45-124 (GKMF…FPKR) and 134-211 (KKVF…KAQP). Required for binding to target mRNAs stretches follow at residues 88 to 93 (FGFITF) and 177 to 182 (FGFVTF).

Belongs to the Musashi family. Expressed in the gut and in AVA, AFD, RMD, RMED, RMEV, RMER and RMEL neurons (at protein level). In the tail expressed in neurons and all the ray sensilla. Expressed in male specific C1-C4 neurons.

Its subcellular location is the cytoplasm. It is found in the perikaryon. RNA binding protein that regulates the expression of target mRNAs at the translation level. Binds RNA containing the 5'-[GA]U(1-3)AGU-3' motif located in the 3' UTR of the target mRNA. Binds to the mRNA of three Arp2/3 complex components arx-1, arx-2 and arx-3 and negatively regulates their translation during association learning. Plays a role in time-dependent memory loss and the retention of conditioned behavior over time, probably through negative regulation of the Arp2/3 actin cytoskeleton branching complex and regulation of synapse size. Required for two aspects of male mating behavior: turning around the hermaphrodite head or tail and vulva location. The sequence is that of RNA-binding protein Musashi homolog 1 from Caenorhabditis elegans.